Here is a 148-residue protein sequence, read N- to C-terminus: Large ribosomal subunit protein bL9 (148 aa).

This sequence belongs to the bacterial ribosomal protein bL9 family.

Its function is as follows. Binds to the 23S rRNA. The chain is Large ribosomal subunit protein bL9 from Listeria monocytogenes serotype 4b (strain CLIP80459).